A 388-amino-acid polypeptide reads, in one-letter code: GTPase Obg (388 aa).

An Obg domain is found at methionine 1–leucine 159. Residues alanine 160 to arginine 333 enclose the OBG-type G domain. Residues glycine 166–serine 173, phenylalanine 191–valine 195, aspartate 213–glycine 216, asparagine 283–aspartate 286, and serine 314–tyrosine 316 each bind GTP. Residues serine 173 and threonine 193 each coordinate Mg(2+).

It belongs to the TRAFAC class OBG-HflX-like GTPase superfamily. OBG GTPase family. Monomer. It depends on Mg(2+) as a cofactor.

The protein resides in the cytoplasm. In terms of biological role, an essential GTPase which binds GTP, GDP and possibly (p)ppGpp with moderate affinity, with high nucleotide exchange rates and a fairly low GTP hydrolysis rate. Plays a role in control of the cell cycle, stress response, ribosome biogenesis and in those bacteria that undergo differentiation, in morphogenesis control. This is GTPase Obg from Shewanella frigidimarina (strain NCIMB 400).